A 314-amino-acid polypeptide reads, in one-letter code: Olfactory receptor 5B17 (314 aa).

Over 1–23 the chain is Extracellular; sequence MENNTEVSEFILLGLTNAPELQV. Residue Asn3 is glycosylated (N-linked (GlcNAc...) asparagine). Residues 24 to 44 traverse the membrane as a helical segment; that stretch reads PLFIMFTLIYLITLTGNLGMI. Residues 45 to 52 are Cytoplasmic-facing; that stretch reads ILILLDSH. The chain crosses the membrane as a helical span at residues 53–73; it reads LHTPMYFFLSNLSLAGIGYSS. At 74-97 the chain is on the extracellular side; sequence AVTPKVLTGLLIEDKAISYSACAA. Cys95 and Cys187 are disulfide-bonded. Residues 98–118 form a helical membrane-spanning segment; sequence QMFFCAVFATVENYLLSSMAY. Topologically, residues 119–137 are cytoplasmic; that stretch reads DRYAAVCNPLHYTTTMTTR. Residues 138-158 traverse the membrane as a helical segment; it reads VCACLAIGCYVIGFLNASIQI. Over 159 to 194 the chain is Extracellular; sequence GDTFRLSFCMSNVIHHFFCDKPAVITLTCSEKHISE. The helical transmembrane segment at 195–215 threads the bilayer; that stretch reads LILVLISSFNVFFALLVTLIS. Residues 216–235 are Cytoplasmic-facing; that stretch reads YLFILITILKRHTGKGYQKP. The chain crosses the membrane as a helical span at residues 236 to 256; the sequence is LSTCGSHLIAIFLFYITVIIM. Topologically, residues 257-269 are extracellular; sequence YIRPSSSHSMDTD. Residues 270-290 form a helical membrane-spanning segment; the sequence is KIASVFYTMIIPMLSPIVYTL. Over 291–314 the chain is Cytoplasmic; it reads RNKDVKNAFMKVVEKAKYSLDSVF.

Belongs to the G-protein coupled receptor 1 family.

The protein localises to the cell membrane. Odorant receptor. This chain is Olfactory receptor 5B17 (OR5B17), found in Homo sapiens (Human).